The primary structure comprises 37 residues: Large ribosomal subunit protein bL36 (37 aa).

Belongs to the bacterial ribosomal protein bL36 family.

The polypeptide is Large ribosomal subunit protein bL36 (Synechococcus sp. (strain CC9605)).